Reading from the N-terminus, the 333-residue chain is 4-hydroxyproline epimerase (333 aa).

Catalysis depends on cysteine 90, which acts as the Proton acceptor. Substrate contacts are provided by residues 91-92 and aspartate 249; that span reads GH. Cysteine 253 acts as the Proton donor in catalysis. 254–255 serves as a coordination point for substrate; sequence GT.

Belongs to the proline racemase family. As to quaternary structure, homodimer.

It catalyses the reaction trans-4-hydroxy-L-proline = cis-4-hydroxy-D-proline. Allows intracellular utilization of 4-hydroxyproline, one of the major constituents of host collagen, by converting 4-hydroxy-L-proline to 4-hydroxy-D-proline, which can be further metabolized by intracellular 4-hydroxy-D-proline oxidases. Strong B-cell mitogen. Plays an important role in the regulation of intra- and extracellular amino acid pools, allowing the bacterium to profit from host precursors and enzymatic pathways. This chain is 4-hydroxyproline epimerase, found in Brucella abortus (strain S19).